Reading from the N-terminus, the 484-residue chain is Ribosome biogenesis protein NOP53 (484 aa).

Disordered stretches follow at residues 1–51 (MAAG…WRRL) and 304–356 (ESDG…AARK). Ala2 is modified (N-acetylalanine). Residue Ser29 is modified to Phosphoserine. Positions 35–49 (RRRRRGPRNKKRGWR) are enriched in basic residues. The mediates interaction with CDKN2A/isoform tumor suppressor ARF stretch occupies residues 148 to 437 (KEELWEKLAK…SELSGSLRTL (290 aa)). Ser305 is modified (phosphoserine). The segment covering 336 to 348 (PEKRMEKKTEQQR) has biased composition (basic and acidic residues). The segment at 348-392 (RRREKAARKLRVQQAALRAARLQHQELFRLRGIKAQVARRLAELA) is mediates interaction with human herpesvirus 8 protein ORF16. Nucleolar localization signal stretches follow at residues 353–401 (AARK…RRIR) and 402–484 (RLAE…EIQL).

Belongs to the NOP53 family. In terms of assembly, homooligomer. Interacts with PTEN; regulates PTEN phosphorylation and increases its stability. Interacts with RPL11; retains RPL11 into the nucleolus. Interacts with CDKN2A/isoform tumor suppressor ARF; the interaction is direct and promotes ARF nucleoplasmic relocalization and ubiquitin-mediated proteasomal degradation. Interacts with NPM1; the interaction is direct and competitive with MYC. Interacts with NF2 (via FERM domain); the interaction is direct. Interacts with p53/TP53 (via the oligomerization region); the interaction is direct and may prevent the MDM2-mediated proteasomal degradation of p53/TP53. Interacts with RIGI; may regulate RIGI through USP15-mediated 'Lys-63'-linked deubiquitination. Interacts with UBTF. Ubiquitin-mediated proteasomal degradation is regulated by c-JUN. It is associated with relocalization to the nucleoplasm and decreased homooligomerization. Post-translationally, phosphorylated upon DNA damage probably by ATM and DNA-PK; may regulate NOP53 degradation.

It is found in the nucleus. Its subcellular location is the nucleolus. The protein resides in the nucleoplasm. In terms of biological role, nucleolar protein which is involved in the integration of the 5S RNP into the ribosomal large subunit during ribosome biogenesis. In ribosome biogenesis, may also play a role in rRNA transcription. Also functions as a nucleolar sensor that regulates the activation of p53/TP53 in response to ribosome biogenesis perturbation, DNA damage and other stress conditions. DNA damage or perturbation of ribosome biogenesis disrupt the interaction between NOP53 and RPL11 allowing RPL11 transport to the nucleoplasm where it can inhibit MDM2 and allow p53/TP53 activation. It may also positively regulate the function of p53/TP53 in cell cycle arrest and apoptosis through direct interaction, preventing its MDM2-dependent ubiquitin-mediated proteasomal degradation. Originally identified as a tumor suppressor, it may also play a role in cell proliferation and apoptosis by positively regulating the stability of PTEN, thereby antagonizing the PI3K-AKT/PKB signaling pathway. May also inhibit cell proliferation and increase apoptosis through its interaction with NF2. May negatively regulate NPM1 by regulating its nucleoplasmic localization, oligomerization and ubiquitin-mediated proteasomal degradation. Thereby, may prevent NPM1 interaction with MYC and negatively regulate transcription mediated by the MYC-NPM1 complex. May also regulate cellular aerobic respiration. In the cellular response to viral infection, may play a role in the attenuation of interferon-beta through the inhibition of RIGI. The chain is Ribosome biogenesis protein NOP53 from Mus musculus (Mouse).